We begin with the raw amino-acid sequence, 386 residues long: L-prolyl-[peptidyl-carrier protein] dehydrogenase (386 aa).

FAD is bound by residues 125–134 (NAATEPDAGS) and 158–160 (FIT). The Proton acceptor role is filled by E244. FAD-binding positions include R270, Q281, 338 to 342 (QTFGG), and 367 to 369 (TND).

The protein belongs to the acyl-CoA dehydrogenase family. The cofactor is FAD.

The enzyme catalyses L-prolyl-[peptidyl-carrier protein] + 2 oxidized [electron-transfer flavoprotein] + H(+) = (1H-pyrrole-2-carbonyl)-[peptidyl-carrier protein] + 2 reduced [electron-transfer flavoprotein]. Its pathway is antibiotic biosynthesis; prodigiosin biosynthesis. In terms of biological role, involved in the biosynthesis of 4-methoxy-2,2'-bipyrrole-5-carbaldehyde (MBC), one of the terminal products involved in the biosynthesis of the red antibiotic prodigiosin (Pig). Catalyzes the desaturation of the L-prolyl-[PigG] to yield 1H-pyrrole-2-carbonyl-[PigG]. This is L-prolyl-[peptidyl-carrier protein] dehydrogenase from Serratia sp. (strain ATCC 39006) (Prodigiosinella confusarubida).